A 923-amino-acid chain; its full sequence is Probable ribosylation factor GTPase-activating protein cnt6 (923 aa).

Serine 207 carries the phosphoserine modification. Residues 444 to 455 (TTRRDKGREMHR) are compositionally biased toward basic and acidic residues. The segment at 444–476 (TTRRDKGREMHRSQVIQTSGRPKSMAPPSPSPI) is disordered. Residues 526-632 (KIFKEGLLLV…WIEAICEAAK (107 aa)) enclose the PH domain. In terms of domain architecture, Arf-GAP spans 714-837 (NIFIQMLRKT…AFIDFAGVDA (124 aa)). The segment at 730–754 (CADCGSVKDVTWCSINIPVVLCIEC) adopts a C4-type zinc-finger fold.

It localises to the cytoplasm. The protein resides in the cell tip. Its function is as follows. GTPase-activating protein for the ADP ribosylation factor family. The sequence is that of Probable ribosylation factor GTPase-activating protein cnt6 (cnt6) from Schizosaccharomyces pombe (strain 972 / ATCC 24843) (Fission yeast).